Reading from the N-terminus, the 257-residue chain is NAD kinase (257 aa).

Catalysis depends on Asp46, which acts as the Proton acceptor. Residues 46-47 (DG), 116-117 (NE), Asp146, Ala154, and 157-162 (TAYNLS) contribute to the NAD(+) site.

Belongs to the NAD kinase family. A divalent metal cation is required as a cofactor.

Its subcellular location is the cytoplasm. It catalyses the reaction NAD(+) + ATP = ADP + NADP(+) + H(+). Its function is as follows. Involved in the regulation of the intracellular balance of NAD and NADP, and is a key enzyme in the biosynthesis of NADP. Catalyzes specifically the phosphorylation on 2'-hydroxyl of the adenosine moiety of NAD to yield NADP. This chain is NAD kinase, found in Mesorhizobium japonicum (strain LMG 29417 / CECT 9101 / MAFF 303099) (Mesorhizobium loti (strain MAFF 303099)).